The primary structure comprises 268 residues: Type III pantothenate kinase (268 aa).

ATP is bound at residue 6-13 (DVGNTNIV). Residues Y100 and 107–110 (GADR) contribute to the substrate site. Residue D109 is the Proton acceptor of the active site. Position 129 (D129) interacts with K(+). Position 132 (T132) interacts with ATP. T184 serves as a coordination point for substrate.

This sequence belongs to the type III pantothenate kinase family. As to quaternary structure, homodimer. Requires NH4(+) as cofactor. K(+) is required as a cofactor.

It localises to the cytoplasm. It catalyses the reaction (R)-pantothenate + ATP = (R)-4'-phosphopantothenate + ADP + H(+). It functions in the pathway cofactor biosynthesis; coenzyme A biosynthesis; CoA from (R)-pantothenate: step 1/5. Functionally, catalyzes the phosphorylation of pantothenate (Pan), the first step in CoA biosynthesis. This chain is Type III pantothenate kinase, found in Alkaliphilus metalliredigens (strain QYMF).